Consider the following 488-residue polypeptide: Probable cytosol aminopeptidase (488 aa).

Mn(2+) is bound by residues Lys-251 and Asp-256. The active site involves Lys-263. The Mn(2+) site is built by Asp-274, Asp-333, and Glu-335. Arg-337 is a catalytic residue.

Belongs to the peptidase M17 family. It depends on Mn(2+) as a cofactor.

It is found in the cytoplasm. The enzyme catalyses Release of an N-terminal amino acid, Xaa-|-Yaa-, in which Xaa is preferably Leu, but may be other amino acids including Pro although not Arg or Lys, and Yaa may be Pro. Amino acid amides and methyl esters are also readily hydrolyzed, but rates on arylamides are exceedingly low.. The catalysed reaction is Release of an N-terminal amino acid, preferentially leucine, but not glutamic or aspartic acids.. In terms of biological role, presumably involved in the processing and regular turnover of intracellular proteins. Catalyzes the removal of unsubstituted N-terminal amino acids from various peptides. This Cenarchaeum symbiosum (strain A) protein is Probable cytosol aminopeptidase.